Reading from the N-terminus, the 146-residue chain is Hemoglobin subunit beta (146 aa).

Residues 2 to 146 (HWTAEEKQLI…VAHALARKYH (145 aa)) form the Globin domain. Positions 63 and 92 each coordinate heme b.

The protein belongs to the globin family. Heterotetramer of two alpha chains and two beta chains. As to expression, red blood cells.

Its function is as follows. Involved in oxygen transport from the lung to the various peripheral tissues. The chain is Hemoglobin subunit beta (HBB) from Branta canadensis (Canada goose).